The primary structure comprises 214 residues: Thymidylate kinase (214 aa).

Residue 12-19 (GLDGSGKS) participates in ATP binding.

It belongs to the thymidylate kinase family.

The catalysed reaction is dTMP + ATP = dTDP + ADP. In terms of biological role, phosphorylation of dTMP to form dTDP in both de novo and salvage pathways of dTTP synthesis. This is Thymidylate kinase from Bdellovibrio bacteriovorus (strain ATCC 15356 / DSM 50701 / NCIMB 9529 / HD100).